A 366-amino-acid chain; its full sequence is Neuropeptide Y receptor type 1 (366 aa).

Residues Met1 to Ala39 are Extracellular-facing. 3 N-linked (GlcNAc...) asparagine glycosylation sites follow: Asn2, Asn9, and Asn15. Residues Leu40–Ile60 form a helical membrane-spanning segment. The Cytoplasmic segment spans residues Leu61–Leu82. The chain crosses the membrane as a helical span at residues Leu83 to Phe103. Residues Gly104–Asn111 lie on the Extracellular side of the membrane. Cys108 and Cys193 are joined by a disulfide. A helical transmembrane segment spans residues Glu112 to Glu132. The Cytoplasmic segment spans residues Arg133–His149. Residues Ala150–Met170 traverse the membrane as a helical segment. Residues Tyr171–Arg203 are Extracellular-facing. Residue Asn181 is glycosylated (N-linked (GlcNAc...) asparagine). A helical membrane pass occupies residues Leu204–Val224. At Cys225–Leu260 the chain is on the cytoplasmic side. A helical membrane pass occupies residues Leu261–Phe281. At Asp282–Asn294 the chain is on the extracellular side. A helical transmembrane segment spans residues Leu295–Tyr315. Residues Gly316 to Ala366 lie on the Cytoplasmic side of the membrane. Cys333 is lipidated: S-palmitoyl cysteine.

This sequence belongs to the G-protein coupled receptor 1 family.

The protein resides in the cell membrane. Receptor for neuropeptide Y and peptide YY. The protein is Neuropeptide Y receptor type 1 (npy1r) of Xenopus laevis (African clawed frog).